A 776-amino-acid polypeptide reads, in one-letter code: Protein FAM83C (776 aa).

Residues 1 to 340 are DUF1669; the sequence is MQGCQAGASI…LYAESQPVEG (340 aa). 5 disordered regions span residues 344 to 467, 494 to 565, 617 to 653, 669 to 694, and 716 to 745; these read NEDP…STSP, SRLP…SLQH, HGQLDLLPQNPKPQAPKIPSDAYSSAGPSKPSLDDRR, PFRSEGPGPSCPPEPSPVRMAGVGSA, and QGARQKPEPGIPGAPVSGHQNGSSNDLFAP. Over residues 368 to 385 the composition is skewed to low complexity; it reads SATGSSPSSNSLSSIKHS. The span at 452 to 467 shows a compositional bias: polar residues; sequence PWSQSSPALNHSSTSP. Over residues 523 to 539 the composition is skewed to basic and acidic residues; sequence VEEKKVSLSQSHDHLDR. The segment covering 554 to 563 has biased composition (polar residues); sequence SRVTPDSSSL.

This sequence belongs to the FAM83 family. As to quaternary structure, directly interacts (via DUF1669) with CSNK1A1 and CSNK1A1L. May interact with RAF1. Post-translationally, phosphorylated by CSNK1A1.

Its subcellular location is the cytoplasm. Functionally, may play a role in MAPK signaling. In Mus musculus (Mouse), this protein is Protein FAM83C.